The primary structure comprises 634 residues: DNA-directed RNA polymerase subunit gamma (634 aa).

The Zn(2+) site is built by Cys74, Cys76, Cys89, and Cys92. Mg(2+) contacts are provided by Asp471, Asp473, and Asp475.

The protein belongs to the RNA polymerase beta' chain family. RpoC1 subfamily. In cyanobacteria the RNAP catalytic core is composed of 2 alpha, 1 beta, 1 beta', 1 gamma and 1 omega subunit. When a sigma factor is associated with the core the holoenzyme is formed, which can initiate transcription. It depends on Mg(2+) as a cofactor. Zn(2+) is required as a cofactor.

The enzyme catalyses RNA(n) + a ribonucleoside 5'-triphosphate = RNA(n+1) + diphosphate. Functionally, DNA-dependent RNA polymerase catalyzes the transcription of DNA into RNA using the four ribonucleoside triphosphates as substrates. In Prochlorococcus marinus (strain AS9601), this protein is DNA-directed RNA polymerase subunit gamma.